Here is a 300-residue protein sequence, read N- to C-terminus: Probable endonuclease 4 (300 aa).

Zn(2+) is bound by residues His68, His109, Glu144, Asp178, His181, His213, Asp226, His228, and Glu258.

The protein belongs to the AP endonuclease 2 family. Requires Zn(2+) as cofactor.

The enzyme catalyses Endonucleolytic cleavage to 5'-phosphooligonucleotide end-products.. In terms of biological role, endonuclease IV plays a role in DNA repair. It cleaves phosphodiester bonds at apurinic or apyrimidinic (AP) sites, generating a 3'-hydroxyl group and a 5'-terminal sugar phosphate. This Latilactobacillus sakei subsp. sakei (strain 23K) (Lactobacillus sakei subsp. sakei) protein is Probable endonuclease 4.